A 311-amino-acid polypeptide reads, in one-letter code: E3 ubiquitin-protein ligase RNF126 (311 aa).

Ala-2 bears the N-acetylalanine mark. Ser-5 carries the phosphoserine modification. The interval 5-100 (SPHPGRYFCH…FEIPTFPPGA (96 aa)) is required for interaction with BAG6. Cys-13, Cys-16, Cys-29, and Cys-32 together coordinate Zn(2+). The C4-type zinc finger occupies 13-32 (CHCCSVEIVPRLPDYICPRC). Disordered stretches follow at residues 42 to 64 (EETRSTENGSAPSTAPTDQSRPP) and 94 to 132 (PTFPPGAQADDGRDPESRRERDHPSRHRYGARQPRARLT). The segment covering 47–61 (TENGSAPSTAPTDQS) has biased composition (polar residues). Positions 103 to 116 (DDGRDPESRRERDH) are enriched in basic and acidic residues. The span at 117–132 (PSRHRYGARQPRARLT) shows a compositional bias: basic residues. The interval 200–304 (TGPPPADKEK…SSSSSSSPSN (105 aa)) is sufficient for interaction with AICDA. The segment at 229-270 (CPVCKDDYALGERVRQLPCNHLFHDGCIVPWLEQHDSCPVCR) adopts an RING-type zinc-finger fold. The interval 277–311 (NTATNPPGLTGVSFSSSSSSSSSSSPSNENATSNS) is disordered. A compositionally biased stretch (low complexity) spans 289 to 311 (SFSSSSSSSSSSSPSNENATSNS).

In terms of assembly, interacts with CCDC50, EGFR, FLT3 and SCAMP3. Interacts with BAG6 (via ubiquitin-like domain); required for BAG6-dependent ubiquitination of proteins mislocalized to the cytosol. Interacts with CDKN1A. Interacts with AICDA. Ubiquitinated. May undergo autoubiquitination. Highly expressed in liver and testis.

The protein resides in the cytoplasm. The protein localises to the nucleus. It catalyses the reaction S-ubiquitinyl-[E2 ubiquitin-conjugating enzyme]-L-cysteine + [acceptor protein]-L-lysine = [E2 ubiquitin-conjugating enzyme]-L-cysteine + N(6)-ubiquitinyl-[acceptor protein]-L-lysine.. Its pathway is protein modification; protein ubiquitination. E3 ubiquitin-protein ligase that mediates ubiquitination oF target proteins. Depending on the associated E2 ligase, mediates 'Lys-27'-, 'Lys-29'-, 'Lys-48'- and/or 'Lys-63'-linked polyubiquitination of substrates. Part of a BAG6-dependent quality control process ensuring that proteins of the secretory pathway that are mislocalized to the cytosol are degraded by the proteasome. Probably acts by providing the ubiquitin ligase activity associated with the BAG6 complex and be responsible for ubiquitination of the hydrophobic mislocalized proteins and their targeting to the proteasome. May also play a role in the endosomal recycling of IGF2R, the cation-independent mannose-6-phosphate receptor. May play a role in the endosomal sorting and degradation of several membrane receptors including EGFR, FLT3, MET and CXCR4, by mediating their ubiquitination. By ubiquitinating CDKN1A/p21 and targeting it for degradation, may also promote cell proliferation. May monoubiquitinate AICDA. Acts as a regulator of DNA repair by mediating 'Lys-27'- and 'Lys-29'-linked polyubiquitination of MRE11, thereby promoting the exonuclease activity of MRE11. This Homo sapiens (Human) protein is E3 ubiquitin-protein ligase RNF126.